An 89-amino-acid chain; its full sequence is MVRFTARVAGLVQGVGFRDYVRTRGRRLGLVGSATNLPDGAVEVVAEGPEPACRDLLHLLMTGHTPGRTDRVEAVWQVAQSDLTDFRRK.

The Acylphosphatase-like domain occupies 3–89 (RFTARVAGLV…QSDLTDFRRK (87 aa)). Catalysis depends on residues R18 and N36.

It belongs to the acylphosphatase family.

It catalyses the reaction an acyl phosphate + H2O = a carboxylate + phosphate + H(+). The sequence is that of Acylphosphatase (acyP) from Frankia casuarinae (strain DSM 45818 / CECT 9043 / HFP020203 / CcI3).